A 157-amino-acid polypeptide reads, in one-letter code: Putative pre-16S rRNA nuclease (157 aa).

The protein belongs to the YqgF nuclease family.

The protein localises to the cytoplasm. Could be a nuclease involved in processing of the 5'-end of pre-16S rRNA. In Ruegeria sp. (strain TM1040) (Silicibacter sp.), this protein is Putative pre-16S rRNA nuclease.